A 202-amino-acid chain; its full sequence is MRNSSLRDASGSNDAQVPHKTELLNLPDHVLTEVAKRLATNNPVESAENIANFSKSHRFTRDAVRTEPLEKFSSRLKILSRNAKLLSHAVRHAATLPDGEQLSEAQLSQMRSEVATRPVLGVAYTHQDGQPEERLSGNHLDHKINNIPNLVFNVAEPIMFNEISALEVMAEVRPIARSIKTAHDDARAELMSADRPRSTRGL.

Positions 1-15 (MRNSSLRDASGSNDA) are enriched in polar residues. The disordered stretch occupies residues 1–21 (MRNSSLRDASGSNDAQVPHKT). One can recognise an F-box domain in the interval 20 to 42 (KTELLNLPDHVLTEVAKRLATNN).

In terms of assembly, component of SCF(virF) E3 ubiquitin ligase complexes. Interacts with host VIP1 and SKP1A. Interacts with Arabidopsis thaliana ENAP1/VFP3 and VFP5 in the host cell nucleus.

The protein localises to the host nucleus. Functionally, in the host plant, component of SCF(virF) E3 ubiquitin ligase complexes, which mediate the ubiquitination and subsequent proteasomal degradation of target proteins such as the host VIP1, after its implication in T-DNA translocation to the host nucleus. Required for the formation of tumors of a wild-type size on certain plant species only. In Agrobacterium tumefaciens (strain 15955), this protein is Virulence protein F.